Here is a 103-residue protein sequence, read N- to C-terminus: MYAVIKTGGKQYRVEVGNKLKVETLPAEVGSDIQLDQVLMIADGEAISAGAPLLDQAKVSATVVSHGRHDKIRIFKMRRRKHYRKQQGHRQNYTEIQITGISA.

It belongs to the bacterial ribosomal protein bL21 family. In terms of assembly, part of the 50S ribosomal subunit. Contacts protein L20.

In terms of biological role, this protein binds to 23S rRNA in the presence of protein L20. The chain is Large ribosomal subunit protein bL21 from Nitrosomonas europaea (strain ATCC 19718 / CIP 103999 / KCTC 2705 / NBRC 14298).